We begin with the raw amino-acid sequence, 838 residues long: Translation initiation factor IF-2 (838 aa).

A disordered region spans residues 50–108 (VQSGKKPESPEKKDIKQNTQKEAPETQTQQKPIEQEVETKQNIDSTPIKVEPKQESLAS). Over residues 54-65 (KKPESPEKKDIK) the composition is skewed to basic and acidic residues. Positions 66 to 81 (QNTQKEAPETQTQQKP) are enriched in polar residues. The tr-type G domain occupies 337–506 (SRAPVVTIMG…LLQAELLELK (170 aa)). The tract at residues 346 to 353 (GHVDHGKT) is G1. 346 to 353 (GHVDHGKT) provides a ligand contact to GTP. The G2 stretch occupies residues 371–375 (GITQH). Positions 392 to 395 (DTPG) are G3. GTP contacts are provided by residues 392–396 (DTPGH) and 446–449 (NKMD). Residues 446 to 449 (NKMD) are G4. The interval 482 to 484 (SAK) is G5.

The protein belongs to the TRAFAC class translation factor GTPase superfamily. Classic translation factor GTPase family. IF-2 subfamily.

The protein resides in the cytoplasm. One of the essential components for the initiation of protein synthesis. Protects formylmethionyl-tRNA from spontaneous hydrolysis and promotes its binding to the 30S ribosomal subunits. Also involved in the hydrolysis of GTP during the formation of the 70S ribosomal complex. This is Translation initiation factor IF-2 from Campylobacter fetus subsp. fetus (strain 82-40).